Here is a 342-residue protein sequence, read N- to C-terminus: Protein RecA (342 aa).

Belongs to the RecA family.

The protein localises to the cytoplasm. Can catalyze the hydrolysis of ATP in the presence of single-stranded DNA, the ATP-dependent uptake of single-stranded DNA by duplex DNA, and the ATP-dependent hybridization of homologous single-stranded DNAs. It interacts with LexA causing its activation and leading to its autocatalytic cleavage. The protein is Protein RecA of Pectobacterium carotovorum (Erwinia carotovora).